A 204-amino-acid polypeptide reads, in one-letter code: Large ribosomal subunit protein eL15 (204 aa).

The disordered stretch occupies residues Met161–Phe180. Basic residues predominate over residues Lys169–Phe180.

Belongs to the eukaryotic ribosomal protein eL15 family. Component of the large ribosomal subunit.

Its subcellular location is the cytoplasm. Its function is as follows. Component of the large ribosomal subunit. The ribosome is a large ribonucleoprotein complex responsible for the synthesis of proteins in the cell. The polypeptide is Large ribosomal subunit protein eL15 (rpl15) (Ictalurus punctatus (Channel catfish)).